A 190-amino-acid polypeptide reads, in one-letter code: ATP synthase subunit b (190 aa).

Residues 4 to 24 (ILAPVLSLVLIAGVASPALAA) form a helical membrane-spanning segment.

This sequence belongs to the ATPase B chain family. F-type ATPases have 2 components, F(1) - the catalytic core - and F(0) - the membrane proton channel. F(1) has five subunits: alpha(3), beta(3), gamma(1), delta(1), epsilon(1). F(0) has three main subunits: a(1), b(2) and c(10-14). The alpha and beta chains form an alternating ring which encloses part of the gamma chain. F(1) is attached to F(0) by a central stalk formed by the gamma and epsilon chains, while a peripheral stalk is formed by the delta and b chains.

Its subcellular location is the cell inner membrane. F(1)F(0) ATP synthase produces ATP from ADP in the presence of a proton or sodium gradient. F-type ATPases consist of two structural domains, F(1) containing the extramembraneous catalytic core and F(0) containing the membrane proton channel, linked together by a central stalk and a peripheral stalk. During catalysis, ATP synthesis in the catalytic domain of F(1) is coupled via a rotary mechanism of the central stalk subunits to proton translocation. Functionally, component of the F(0) channel, it forms part of the peripheral stalk, linking F(1) to F(0). This is ATP synthase subunit b from Ruegeria pomeroyi (strain ATCC 700808 / DSM 15171 / DSS-3) (Silicibacter pomeroyi).